Reading from the N-terminus, the 1231-residue chain is MSSVLSEYTIGGVKILFPCRAYPSQLAMMNSIMRGLNCKQHCLLESPTGSGKSLALLCSALAWQQSLYGKQLVDEKSDEKEWKKMERVTPCCCSCHLKNSDQTTFSSDRQMNSTDNAPSNISGASSNKTTLASKLCAKKQASFTTDQDDDFQTDRKRIRQSHDEQLQARKRRCYEKGVQFIDDDDDDDRDHVKFDSYNQRRASMDSCAEEAIAASSNHSAGPCSLCFCGQTKEEDKATEKCKKENGEKPKVPKIFFGTRTHKQIAQITRELRRTAYSSVRMTILSSREHTCVHPDIHSNRNERCKELLEAKDGHSCRFYHGVHKMNEQSLLQYRHGIDKAWDIEELVGLGKRLRACAYFAARELMQGADIVFCPYNYLLDSQIRESMEICLENQVVILDEAHNIEDCARESASFSCSDEQLMYARDEIDSMVNHGIRVSDHEPLRAVCYSLTNWIRQCSDQLVEREYEASCKVWNGKEILSIFHDMGITNATFPLLKVNLAAVVEKEEKITMFHGQENVIKIPTLSPQSQMVLKGLFLVLDYLFRQNNRFAEDYRVALQQSYTWTNRPDIPDENGFFARPRSRRSIRQKIMVYTLNFWCLNPAVAFSDLSSNARTIVLTSGTLSPMGSFSSELGVKFSIQLEANHVIHKSQVWVGTVGAGPKGRKLCATFQHTETFDFQDEIGALLLSVCQTVSHGILCFLPSYKMLEKLKDRWMHTGLWENLERIKTVIKEPQGGDKTDFDKLLQMYYDAIRYKGEKDGALLIAVCRGKVSEGLDFSDNNARAVVTVGIPFPNIKDLQVELKRKYNDQHAKNRGLLPGSQWYEIQAYRALNQALGRCIRHKNDWGALILVDDRFRSNPKYITGLSKWVRQLVQHHSTFNGALESLTEFSKNQQQRMQMSSTNCDDEPSQGTSSSSKNTSPTSSLLEFTVHPTQSVSEFTQPTSSTQSSVTSPPEIAIPFSPIQASLGGTAPRDNAEVLSHWKEEQRRKSNTSIKTNLMKSFEKSKSNYSKQRTSFYNYFKSNAHTSTPRQSSSKTRESNLEICCNELASGYSASANSGSLSQGFGRENNVSRKQDEGLNESCQEILCNAVPLFHCTNKETHASVSPPRKYVEPSVSMLPEDNTDTDITIHCTPELYDDDGQENLVSDEEDKCNEEKENKIDSGRADKDTNACALDTSVKRENLFHKEEYLNVSGNENAFNIGRNKGTEQKNRENRLSRSRNKGVSSFFLD.

The Helicase ATP-binding domain maps to 11-448 (GGVKILFPCR…SDHEPLRAVC (438 aa)). Residue 46–53 (SPTGSGKS) coordinates ATP. Disordered regions lie at residues 104-126 (TFSS…GASS) and 147-166 (QDDD…DEQL). A compositionally biased stretch (basic and acidic residues) spans 152 to 166 (QTDRKRIRQSHDEQL). The short motif at 155–173 (RKRIRQSHDEQLQARKRRC) is the Nuclear localization signal element. [4Fe-4S] cluster-binding residues include cysteine 291, cysteine 304, cysteine 316, and cysteine 356. A DEAH box motif is present at residues 399 to 402 (DEAH). The span at 890 to 903 (SKNQQQRMQMSSTN) shows a compositional bias: polar residues. 3 disordered regions span residues 890–924 (SKNQ…PTSS), 936–956 (VSEF…PPEI), and 1195–1231 (GNEN…FFLD). 2 stretches are compositionally biased toward low complexity: residues 909 to 924 (SQGT…PTSS) and 940 to 954 (TQPT…TSPP). A compositionally biased stretch (basic and acidic residues) spans 1206 to 1217 (KGTEQKNRENRL).

This sequence belongs to the DEAD box helicase family. DEAH subfamily. [4Fe-4S] cluster is required as a cofactor.

Its subcellular location is the nucleus. The catalysed reaction is Couples ATP hydrolysis with the unwinding of duplex DNA at the replication fork by translocating in the 5'-3' direction. This creates two antiparallel DNA single strands (ssDNA). The leading ssDNA polymer is the template for DNA polymerase III holoenzyme which synthesizes a continuous strand.. It carries out the reaction ATP + H2O = ADP + phosphate + H(+). In terms of biological role, DNA-dependent helicase and 5' to 3' DNA helicase required for the maintenance of chromosomal stability. Involved in the repair of DNA double-strand breaks by homologous recombination. Involved in the repair of abasic sites at replication forks by promoting the degradation of DNA-protein cross-links: acts by catalyzing unfolding of HMCES DNA-protein cross-link via its helicase activity, exposing the underlying DNA and enabling cleavage of the DNA-protein adduct by the SPRTN metalloprotease. The protein is Fanconi anemia group J protein homolog (brip1.L) of Xenopus laevis (African clawed frog).